We begin with the raw amino-acid sequence, 259 residues long: V-type proton ATPase subunit D (259 aa).

The disordered stretch occupies residues 214–259; that stretch reads KLKEQEAAQRALEGPPKEEAGGTHSENQPPRNLLAVEEDNLPVLFN.

The protein belongs to the V-ATPase D subunit family. In terms of assembly, V-ATPase is a heteromultimeric enzyme made up of two complexes: the ATP-hydrolytic V1 complex and the proton translocation V0 complex. The V1 complex consists of three catalytic AB heterodimers that form a heterohexamer, three peripheral stalks each consisting of EG heterodimers, one central rotor including subunits D and F, and the regulatory subunits C and H. The proton translocation complex V0 consists of the proton transport subunit a, a ring of proteolipid subunits c9c'', rotary subunit d, and The proton translocation complex V0 consists of the proton transport subunit a, a ring of proteolipid subunits c9c'', rotary subunit d, subunits e and f, and the accessory subunits vah-19/Ac45 and vah-20/PRR.

Its function is as follows. Subunit of the V1 complex of vacuolar(H+)-ATPase (V-ATPase), a multisubunit enzyme composed of a peripheral complex (V1) that hydrolyzes ATP and a membrane integral complex (V0) that translocates protons. V-ATPase is responsible for acidifying and maintaining the pH of intracellular compartments and in some cell types, is targeted to the plasma membrane, where it is responsible for acidifying the extracellular environment. The sequence is that of V-type proton ATPase subunit D from Caenorhabditis briggsae.